The sequence spans 186 residues: Ribosome-recycling factor (186 aa).

The protein belongs to the RRF family.

The protein localises to the cytoplasm. Responsible for the release of ribosomes from messenger RNA at the termination of protein biosynthesis. May increase the efficiency of translation by recycling ribosomes from one round of translation to another. The sequence is that of Ribosome-recycling factor from Rickettsia felis (strain ATCC VR-1525 / URRWXCal2) (Rickettsia azadi).